Here is a 925-residue protein sequence, read N- to C-terminus: MTSNERILQPFTLPNGTELKNRLLMAPMTTCTGYFDGTVTSELVEYYRARAGSIGTIIVECCFIDDYGLAFPGAIGIDNDEKIAGLAKIAEAIKAQGSKAILQIYHGGRMVDPQLIGGRQPVAPSAIAAPREGAAMPRALSGEEVEGMIAKFGDGVRRAILAGFDGVEIHGANTYLIQQFYSPNSNQRDDEWGGSRDNRARFPLAVLDITHKMARQYADDAFIIGYRFSPEEMEVPGIRFDDTMYLLEKLAARGVDYLHFSVGATLRPSIVDTSDPTPLIEKYCAMRSETLAQVPVMGVGGVVNVADAELGLDHGYDLIAVGRACIAYPDWAARIAAGEELELFIDSTQREALHIPEPLWRFSLVEAMIRDMSMGDAKFKPGMFVETVQDDANELVINVSLENDHIADIELAASPVQTVEFTTSFEEIRERILTANTPHVDAISGATSQSEAVKKAVAKAMLKSSKALAAEEGGNDAAPKSYDVVVVGSGGAGLAAAIQAHDEGASVLIVEKMPTIGGNTIKASAGMNAAETRFQRVKGIQDSKELFYQETLKGGHNKNNPQLLRRFVENAPQAIEWLADRGIMLNDITTTGGMSIDRTHRPRDGSAVGGYLISGLVRNITKRGIDVLLDTSVEEILMSGDEVSGVRLVNDEKEVIEVQTKSIVVATGGFSANSAMVVKYRPDLDGFVTTNHKGATGSGIALLERIGAGTVDMGEIQIHPTVEQQTSYLISESIRGGGAILVNQQGNRFFNEMETRDKVSAAIIALPEHYAYIVFDEHVRAKNKAADEYIAKGFVTSASSPRELAEKLGMDYHAFLATLECYNGAVEKQHDEQFGRTTALRAPINEGPFHAIRIAPGVHHTMGGVTINTDGEVLNVDQQPIRGAYAAGEVVGGIHGGNRIGGNAVADIIIFGTLAGHQAAKRARG.

Threonine 447 carries the post-translational modification FMN phosphoryl threonine. Alanine 492, glutamate 511, asparagine 519, threonine 520, alanine 525, glycine 526, and valine 633 together coordinate FAD. Alanine 525 contacts fumarate. Position 525 (alanine 525) interacts with succinate. The succinate site is built by histidine 719, serine 731, and glutamate 732. Serine 731 and glutamate 732 together coordinate fumarate. Residue arginine 756 is the Proton donor of the active site. A fumarate-binding site is contributed by histidine 859. A succinate-binding site is contributed by histidine 859. FAD contacts are provided by histidine 860 and glutamate 889. 2 residues coordinate fumarate: arginine 899 and glycine 902. Arginine 899 and glycine 902 together coordinate succinate. FAD is bound by residues alanine 904 and valine 905.

The protein belongs to the FAD-dependent oxidoreductase 2 family. FRD/SDH subfamily. Monomer. It depends on FAD as a cofactor. FMN is required as a cofactor. Is flavinylated on Thr-447 by ApbE2, encoded in a neighboring gene. Flavinylation is essential for catalytic activity.

Its subcellular location is the cytoplasm. The catalysed reaction is succinate + NAD(+) = fumarate + NADH + H(+). Functionally, catalyzes the anaerobic reduction of fumarate to succinate. Uses NADH as the inherent electron donor in this process. Is involved in anaerobic fumarate respiration in K.pneumoniae. The protein is NADH:fumarate oxidoreductase of Klebsiella pneumoniae (strain 342).